A 187-amino-acid chain; its full sequence is Capsid protein VP10 (187 aa).

Cys45 and Cys51 form a disulfide bridge.

The protein resides in the virion. In terms of biological role, VP10 self-assembles, together with capsid protein VP4, to form an icosahedral caspid of 87 nm in diameter, with a T=43 symmetry and composed of 420 hexamers and 12 pentamers. VP4 proteins arrange into hexons, while VP10 proteins form the pentameric densities located at the 5-fold axes in the virion. The stoichiometry of VP4:VP10 is 42:1. This is Capsid protein VP10 from Sulfolobus polyhedral virus 1 (SPV1).